The chain runs to 247 residues: 3,4-dihydroxy-2-butanone 4-phosphate synthase (247 aa).

D-ribulose 5-phosphate is bound by residues 38 to 39 (RE), aspartate 43, 179 to 183 (RMGQT), and glutamate 203. Glutamate 39 is a Mg(2+) binding site.

This sequence belongs to the DHBP synthase family. As to quaternary structure, homodimer. The cofactor is Mg(2+). It depends on Mn(2+) as a cofactor.

The enzyme catalyses D-ribulose 5-phosphate = (2S)-2-hydroxy-3-oxobutyl phosphate + formate + H(+). It functions in the pathway cofactor biosynthesis; riboflavin biosynthesis; 2-hydroxy-3-oxobutyl phosphate from D-ribulose 5-phosphate: step 1/1. Its function is as follows. Catalyzes the conversion of D-ribulose 5-phosphate to formate and 3,4-dihydroxy-2-butanone 4-phosphate. This Methanosarcina acetivorans (strain ATCC 35395 / DSM 2834 / JCM 12185 / C2A) protein is 3,4-dihydroxy-2-butanone 4-phosphate synthase.